The sequence spans 282 residues: Energy-coupling factor transporter ATP-binding protein EcfA1 (282 aa).

In terms of domain architecture, ABC transporter spans Val-6–Glu-243. Position 40-47 (Gly-40–Ser-47) interacts with ATP.

This sequence belongs to the ABC transporter superfamily. Energy-coupling factor EcfA family. Forms a stable energy-coupling factor (ECF) transporter complex composed of 2 membrane-embedded substrate-binding proteins (S component), 2 ATP-binding proteins (A component) and 2 transmembrane proteins (T component).

The protein localises to the cell membrane. ATP-binding (A) component of a common energy-coupling factor (ECF) ABC-transporter complex. Unlike classic ABC transporters this ECF transporter provides the energy necessary to transport a number of different substrates. The sequence is that of Energy-coupling factor transporter ATP-binding protein EcfA1 from Lactobacillus johnsonii (strain CNCM I-12250 / La1 / NCC 533).